We begin with the raw amino-acid sequence, 2278 residues long: MSSEEPHASISFPDGSHVRSSSTGTSSVNTIDATLSRPNYIKKPSLHIMSTSTTSTTTDLVTNPILSNISVPKISPPTSSSIATATSTSHVTGTASHSNIKANANTSTSVNKKNLPPTTSGRIPSSTIKRYPSRYKPSHSLQLPIKNDSNFKRSSIYASKSTVTAIPIRNNRPISMQNSYARTPDSDHDDVGDEVSSIKSASSSLTASLSKSFLFAFYNNRKKDKTSNNGVLSKEYWMKDESSKECFSCGKTFNTFRRKHHCRICGQIFCSSCTLLIDGDRFGCHAKMRVCYNCYEHADTYEDSSDEENDSTMQLNEPRSRSRSRSSNTNPYSHSHSHLHLISQDNHNGTDLHDPVAATDNPQQQNEVYLLNDDDVQSIMTSGEDSKLFISTPPPPPKMAIPATKQGGSLEISFDSENDRALHYQDDNPGRHHHLDSVPTRYTIRDMDNISHYDTNSNSTLRPHYNTNNSTITINNLNNTTSNNSNYNNTNSNSNINNPAHSLRRSIFHYVSSNSVNKDSNNSSATPASSAQSSSILDPANRIIGNYAHRNYKFKFNYNSKGPSQQNDTANGNNDNNNNNNNNNNNNNNNSASGIADNNNIPSNDNGTTFTLDKKKRNPLTKSKSTSAYLEYPLNEEDSSEDEGSMSIYSVLNDDHKTDNPIRSMRNSTKSFQRAQASLQRMRFRRKSKSKHFPNNSKSSIYRDLNFLTNSTPNLLSVVSDDNLYDDSSPLQDKASSSAASRLTDRKFSNSSGSNNNSNSNSNINTDPWKRIASISGFKLKKEKKRELNEVSLLHMHALLKQLLNDQEISNLQEWITLLDGALRKVLRTILNARDLNTLDFRQTYVKIKRISGGSPQNSEYIDGVVFSKALPSKTMPRHLKNPRILLIMFPLEYQKNNNHFLSIESVFRQEREYLDKLVSRLKSLHPDIIYVGANVSGYALELLNDSGIVVQFNMKPQVIERIAKLTEADIAISVDKLATNIKMGECETFEVKSYIYGNISKTYTFLRGCNPELGGTILLRGDSLENLRKIKQVSEFMVYAIFSLKLESSFFNDNFIQLSTDVYLKRAESKKLQVFEGYFADFLIKFNNRILTVSPTVDFPIPFLLEKARGLEKKLIERINQYESESDLDRQTQLNMLQGLESTITKKHLGNLIKFLHEMEIENLELEFQKRSRQWEVSYSSSQNLLGTGSHQSITVLYSMVSTKTATPCVGPQIVTIDYFWDSDISIGQFIENVVGTARYPCQQGCNGLYLDHYRSYVHGSGKVDVLIEKFQTRLPKLKDIILTWSYCKKCGTSTPILQISEKTWNHSFGKYLEVMFWSYKDSVTGIGKCPHDFTKDHVKYFGYNDLVVRLEYSDLEVHELITPPRKIKWKPHIDIKLKVELYYKILEKINNFYGSVLSRLERIKLDSMTKDKVLSGQAKIIELKSNATEEQKLMLQDLDTFYADSPCDQHLPLNLVIKSLYDKAVNWNSTFAIFAKSYLPSETDISRITAKQLKKLFYDSSRKDSEDKKSLHDEKAKTRKPEKNELPLEGLKDVEKPKIDSKNTTENRDRTNEPQNAVTITTFKDDTPIIPTSGTSHLTVTPSASSVSSSLTPQTEERPPISRSGTGISMTHDKSTRPNIRKMSSDSSLCGLASLANEYSKNNKVSKLATFFDQMHFDALSKEFELERERERLQLNKDKYQAIRLQTSTPIVEIYKNVKDAVDEPLHSRSSGNNLSSANVKTLEAPVGEHSRANNCNPPNLDQNLETELENSISQWGENILNPSGKTTASTHLNSKPVVKETSENPKSIVRESDNSKSEPLPPVITTTTVNKVESTPQPEKSLLMKTLSNFWADRSAYLWKPLVYPTCPSEHIFTDSDVIIREDEPSSLIAFCLSTSDYRNKMMNLNVQQQQQQQTAEAAPAKTGGNSGGTTQTGDPSVNISPSVSTTSHNKGRDSEISSLVTTKEGLLNTPPIEGARDRTPQESQTHSQANLDTLQELEKIMTKKTATHLRYQFEEGLTVMSCKIFFTEHFDVFRKICDCQENFIQSLSRCVKWDSNGGKSGSGFLKTLDDRFIIKELSHAELEAFIKFAPSYFEYMAQAMFHDLPTTLAKVFGFYQIQVKSSISSSKSYKMDVIIMENLFYEKKTTRIFDLKGSMRNRHVEQTGKANEVLLDENMVEYIYESPIHVREYDKKLLRASVWNDTLFLAKMNVMDYSLVIGIDNEGYTLTVGIIDFIRTFTWDKKLESWVKEKGLVGGASVIKQPTVVTPRQYKKRFREAMERYILMVPDPWYREGN.

2 disordered regions span residues 1–30 (MSSE…SVNT) and 76–144 (PPTS…LQLP). An N-acetylserine modification is found at Ser-2. Residues 2–676 (SSEEPHASIS…NSTKSFQRAQ (675 aa)) form a required for localization to the vacuole membrane region. 2 stretches are compositionally biased toward low complexity: residues 18–28 (VRSSSTGTSSV) and 76–89 (PPTS…TSTS). Residues 90–128 (HVTGTASHSNIKANANTSTSVNKKNLPPTTSGRIPSSTI) show a composition bias toward polar residues. Ser-186 bears the Phosphoserine mark. The FYVE-type zinc-finger motif lies at 240–299 (DESSKECFSCGKTFNTFRRKHHCRICGQIFCSSCTLLIDGDRFGCHAKMRVCYNCYEHAD). Positions 246, 249, 262, 265, 270, 273, 291, and 294 each coordinate Zn(2+). Disordered stretches follow at residues 302 to 337 (EDSS…HSHS), 472 to 500 (ITIN…NNPA), 514 to 534 (NSVN…AQSS), 556 to 697 (FNYN…PNNS), and 727 to 766 (DSSP…NINT). Low complexity predominate over residues 472-498 (ITINNLNNTTSNNSNYNNTNSNSNINN). Polar residues predominate over residues 557–570 (NYNSKGPSQQNDTA). Residues 571-601 (NGNNDNNNNNNNNNNNNNNNSASGIADNNNI) show a composition bias toward low complexity. Positions 602–611 (PSNDNGTTFT) are enriched in polar residues. Residues 634 to 644 (LNEEDSSEDEG) are compositionally biased toward acidic residues. Over residues 665 to 679 (MRNSTKSFQRAQASL) the composition is skewed to polar residues. Positions 682-692 (MRFRRKSKSKH) are enriched in basic residues. Positions 729-741 (SPLQDKASSSAAS) are enriched in polar residues. Residues 749–763 (SNSSGSNNNSNSNSN) are compositionally biased toward low complexity. The tract at residues 766 to 1039 (TDPWKRIASI…KIKQVSEFMV (274 aa)) is CCT domain. A CCR domain region spans residues 1181–1500 (SSSQNLLGTG…TAKQLKKLFY (320 aa)). Positions 1506–1554 (DSEDKKSLHDEKAKTRKPEKNELPLEGLKDVEKPKIDSKNTTENRDRTN) are enriched in basic and acidic residues. The segment at 1506-1627 (DSEDKKSLHD…TRPNIRKMSS (122 aa)) is disordered. Residues 1555 to 1564 (EPQNAVTITT) are compositionally biased toward polar residues. Low complexity predominate over residues 1580 to 1595 (LTVTPSASSVSSSLTP). Phosphoserine occurs at positions 1627 and 1630. Polar residues predominate over residues 1766-1776 (SGKTTASTHLN). Disordered stretches follow at residues 1766-1804 (SGKT…EPLP) and 1891-1972 (QQQQ…THSQ). Basic and acidic residues predominate over residues 1780–1799 (VVKETSENPKSIVRESDNSK). The span at 1918–1932 (DPSVNISPSVSTTSH) shows a compositional bias: polar residues. Residues 1932-2266 (HNKGRDSEIS…RFREAMERYI (335 aa)) enclose the PIPK domain. Ser-1938 is subject to Phosphoserine. Thr-1953 carries the phosphothreonine modification.

Component of the PI(3,5)P2 regulatory complex, composed of ATG18, FIG4, FAB1, VAC14 and VAC7. VAC14 nucleates the assembly of the complex and serves as a scaffold. Requires Mg(2+) as cofactor. It depends on Mn(2+) as a cofactor.

It is found in the vacuole membrane. Its subcellular location is the endosome membrane. It catalyses the reaction a 1,2-diacyl-sn-glycero-3-phospho-(1D-myo-inositol-3-phosphate) + ATP = a 1,2-diacyl-sn-glycero-3-phospho-(1D-myo-inositol-3,5-bisphosphate) + ADP + H(+). The enzyme catalyses 1,2-dihexadecanoyl-sn-glycero-3-phospho-(1D-myo-inositol-3-phosphate) + ATP = 1,2-dihexadecanoyl-sn-glycero-3-phospho-(1D-myo-inositol-3,5-phosphate) + ADP + H(+). Activated by VAC14 and VAC7. VAC14 acts as a specific osmotic response regulator. Functionally, the PI(3,5)P2 regulatory complex regulates both the synthesis and turnover of phosphatidylinositol 3,5-bisphosphate (PtdIns(3,5)P2). Catalyzes the phosphorylation of phosphatidylinositol 3-phosphate on the fifth hydroxyl of the myo-inositol ring, to form phosphatidylinositol 3,5-bisphosphate. Required for endocytic-vacuolar pathway and nuclear migration. The product of the reaction, PI(3,5)P2 is an important regulator of vacuole homeostasis perhaps by controlling membrane flux to and/or from the vacuole. PI(3,5)P2 regulates the transition between trans-SNARE complex formation and vacuole membrane fusion. Hyperosmotic shock-induced increase in the levels of PtdIns(3,5)P2 requires the presence of VAC7, VAC14, and/or FIG4. In Saccharomyces cerevisiae (strain ATCC 204508 / S288c) (Baker's yeast), this protein is 1-phosphatidylinositol 3-phosphate 5-kinase FAB1.